The following is a 198-amino-acid chain: 3-isopropylmalate dehydratase small subunit (198 aa).

It belongs to the LeuD family. LeuD type 1 subfamily. Heterodimer of LeuC and LeuD.

The catalysed reaction is (2R,3S)-3-isopropylmalate = (2S)-2-isopropylmalate. It functions in the pathway amino-acid biosynthesis; L-leucine biosynthesis; L-leucine from 3-methyl-2-oxobutanoate: step 2/4. In terms of biological role, catalyzes the isomerization between 2-isopropylmalate and 3-isopropylmalate, via the formation of 2-isopropylmaleate. This Mycobacterium avium (strain 104) protein is 3-isopropylmalate dehydratase small subunit.